We begin with the raw amino-acid sequence, 104 residues long: Toxin-like protein 14 (104 aa).

The signal sequence occupies residues 1 to 25 (MNTYNARLYIFSLALALVILKGTKC).

Post-translationally, contains 4 disulfide bonds. Expressed by the venom gland.

It localises to the secreted. This Urodacus yaschenkoi (Inland robust scorpion) protein is Toxin-like protein 14.